A 187-amino-acid chain; its full sequence is MIHLNILYWPPAGGFGLNTNILEINIINLAVVLGVLIYLGKGVCAGCILNDLLENRKQTILSTIHDAEERYEEATEKLNQARTRLQQAKVKADEIRVNGLTQMEREKQDLINAADEDSRRLEDSKNSTIRFEEQRAIEQVRQQVSRLALERALESLNTRLNNELHSRMIDYHIGLLRAMESTTDQFL.

Residues 29 to 49 (LAVVLGVLIYLGKGVCAGCIL) traverse the membrane as a helical segment.

It belongs to the ATPase B chain family. In terms of assembly, F-type ATPases have 2 components, F(1) - the catalytic core - and F(0) - the membrane proton channel. F(1) has five subunits: alpha(3), beta(3), gamma(1), delta(1), epsilon(1). F(0) has four main subunits: a(1), b(1), b'(1) and c(10-14). The alpha and beta chains form an alternating ring which encloses part of the gamma chain. F(1) is attached to F(0) by a central stalk formed by the gamma and epsilon chains, while a peripheral stalk is formed by the delta, b and b' chains.

Its subcellular location is the plastid. The protein localises to the chloroplast thylakoid membrane. Functionally, f(1)F(0) ATP synthase produces ATP from ADP in the presence of a proton or sodium gradient. F-type ATPases consist of two structural domains, F(1) containing the extramembraneous catalytic core and F(0) containing the membrane proton channel, linked together by a central stalk and a peripheral stalk. During catalysis, ATP synthesis in the catalytic domain of F(1) is coupled via a rotary mechanism of the central stalk subunits to proton translocation. Its function is as follows. Component of the F(0) channel, it forms part of the peripheral stalk, linking F(1) to F(0). This chain is ATP synthase subunit b, chloroplastic, found in Angiopteris evecta (Mule's foot fern).